The sequence spans 255 residues: Ribonuclease HII (255 aa).

Residues 72–255 (AIICGIDEVG…KSFEPIKSLL (184 aa)) enclose the RNase H type-2 domain. Aspartate 78, glutamate 79, and aspartate 170 together coordinate a divalent metal cation.

It belongs to the RNase HII family. Mn(2+) is required as a cofactor. It depends on Mg(2+) as a cofactor.

Its subcellular location is the cytoplasm. It catalyses the reaction Endonucleolytic cleavage to 5'-phosphomonoester.. Functionally, endonuclease that specifically degrades the RNA of RNA-DNA hybrids. In Staphylococcus aureus (strain USA300), this protein is Ribonuclease HII.